We begin with the raw amino-acid sequence, 309 residues long: uncharacterized protein (309 aa).

This sequence belongs to the anthranilate phosphoribosyltransferase family.

This is an uncharacterized protein from Aquifex aeolicus (strain VF5).